The primary structure comprises 231 residues: 2,3-bisphosphoglycerate-dependent phosphoglycerate mutase (231 aa).

Residues 8–15, 21–22, Arg60, 87–90, Lys98, 114–115, and 183–184 each bind substrate; these read RHGESEWN, TG, ERHY, RR, and GN. The active-site Tele-phosphohistidine intermediate is the His9. Residue Glu87 is the Proton donor/acceptor of the active site.

It belongs to the phosphoglycerate mutase family. BPG-dependent PGAM subfamily.

It carries out the reaction (2R)-2-phosphoglycerate = (2R)-3-phosphoglycerate. The protein operates within carbohydrate degradation; glycolysis; pyruvate from D-glyceraldehyde 3-phosphate: step 3/5. Functionally, catalyzes the interconversion of 2-phosphoglycerate and 3-phosphoglycerate. In Streptococcus pyogenes serotype M49 (strain NZ131), this protein is 2,3-bisphosphoglycerate-dependent phosphoglycerate mutase.